The following is a 362-amino-acid chain: Aminomethyltransferase (362 aa).

Belongs to the GcvT family. As to quaternary structure, the glycine cleavage system is composed of four proteins: P, T, L and H.

It carries out the reaction N(6)-[(R)-S(8)-aminomethyldihydrolipoyl]-L-lysyl-[protein] + (6S)-5,6,7,8-tetrahydrofolate = N(6)-[(R)-dihydrolipoyl]-L-lysyl-[protein] + (6R)-5,10-methylene-5,6,7,8-tetrahydrofolate + NH4(+). Its function is as follows. The glycine cleavage system catalyzes the degradation of glycine. This chain is Aminomethyltransferase, found in Listeria monocytogenes serotype 4b (strain CLIP80459).